Here is a 165-residue protein sequence, read N- to C-terminus: MSLPESDKQPRAQRTMGFTELKTWLRHRHPMVYLDRVLDYEPGVQIKTLMAVSGQTDALAGHFPERAIYPASHLMQAISQSAIILFQLSTSRLAGDEVTLVGSIKSRFTRPVVPGDLVIFQLDCESLRPDFFTFSCRATVDGRSVGMLKGSLVRKSLADLGEHLW.

H62 is an active-site residue.

Belongs to the thioester dehydratase family.

It functions in the pathway phytotoxin biosynthesis; coronatine biosynthesis. This Pseudomonas savastanoi pv. glycinea (Pseudomonas syringae pv. glycinea) protein is Coronafacic acid dehydratase (cfa2).